The chain runs to 384 residues: Autophagy-related protein 30 (384 aa).

A disordered region spans residues 1 to 63 (MFSRKQVQKR…ASPGQLRPRT (63 aa)). Residues 13 to 27 (ELSSLHCSNSSNSLN) show a composition bias toward low complexity. Positions 45 to 63 (RGNNRSDNVASPGQLRPRT) are enriched in polar residues. S112 is modified (phosphoserine). Positions 266–291 (VKHDKPSSPLPNYHNTLKQAPSSNSQ) are disordered. The segment covering 278-291 (YHNTLKQAPSSNSQ) has biased composition (polar residues).

As to quaternary structure, interacts with ATG11, ATG17, ATG37, PEX3 and PEX14. Phosphorylation at Ser-112 is required for micro- and macropexophagy.

Its subcellular location is the vacuole lumen. It localises to the preautophagosomal structure. The protein localises to the peroxisome membrane. Its function is as follows. Acts as the peroxisome receptor for pexophagy. Required for both micropexophagy and macropexophagy, but not for the cytoplasm to vacuole transport (Cvt) or autophagy pathways. Required for functional micropexophagic apparatus (MIPA) and relocation of ATG11 to the peroxisome-sequestering arms of the vacuole. The sequence is that of Autophagy-related protein 30 (ATG30) from Komagataella phaffii (strain GS115 / ATCC 20864) (Yeast).